The chain runs to 170 residues: Ankyrin repeat-containing protein C105.02c (170 aa).

ANK repeat units lie at residues 46–76 (LGND…NLNN) and 81–116 (TGDT…DPLL). The tract at residues 150–170 (SADVVADDDDEEEGSGESDEE) is disordered. Residues 154–170 (VADDDDEEEGSGESDEE) are compositionally biased toward acidic residues.

The protein resides in the cytoplasm. Its subcellular location is the nucleus. The sequence is that of Ankyrin repeat-containing protein C105.02c from Schizosaccharomyces pombe (strain 972 / ATCC 24843) (Fission yeast).